Consider the following 395-residue polypeptide: MATINIRRDVKDSFYRYRMPKLQSKIEGKGNGIKTVIPNMSDIAKALGRPPLYVTKFFGFELGAQTTIIADMDRYIVNGAHDAGKLQDLLDVFIRRFVLCASCQNPETELSINKKDQTISYDCKACGYRGVIDGRHKLTGVIVKNPPAKKKSHKHKRDSPVAEEEDGAEDELTRRIRQEAAELPTAEVVNDEDWAVDTSEEAVRARVQELEGNMKDSLTLSDLRGDEEEAESSRYDQFGEWLEDNYPGVSDVEIYKKMKEENIHHKSKAIVVLVQCIITSPYVGEFEKHGALFKKLCTTDKHERALLGGFERLMENTELVHIDVVPKVLLEIYQNDLVSDDMFEKWGAKASKKYVSRETSKKIHEAAEPFLTWLAEASDESESEDEEEEEEDDDE.

28–35 (GKGNGIKT) contacts GTP. Disordered regions lie at residues 146 to 171 (PPAKKKSHKHKRDSPVAEEEDGAEDE) and 374 to 395 (LAEASDESESEDEEEEEEDDDE). Over residues 147–157 (PAKKKSHKHKR) the composition is skewed to basic residues. Composition is skewed to acidic residues over residues 161-170 (VAEEEDGAED) and 377-395 (ASDESESEDEEEEEEDDDE). A W2 domain is found at 228 to 384 (EEAESSRYDQ…AEASDESESE (157 aa)).

This sequence belongs to the eIF-2-beta/eIF-5 family. Monomer.

Functionally, catalyzes the hydrolysis of GTP bound to the 40S ribosomal initiation complex (40S.mRNA.Met-tRNA[F].eIF-2.GTP) with the subsequent joining of a 60S ribosomal subunit resulting in the release of eIF-2 and the guanine nucleotide. The subsequent joining of a 60S ribosomal subunit results in the formation of a functional 80S initiation complex (80S.mRNA.Met-tRNA[F]). This is Probable eukaryotic translation initiation factor 5 (tif5) from Schizosaccharomyces pombe (strain 972 / ATCC 24843) (Fission yeast).